Reading from the N-terminus, the 264-residue chain is Small ribosomal subunit protein eS1 (264 aa).

K34 carries the post-translational modification N6-acetyllysine; alternate. K34 is covalently cross-linked (Glycyl lysine isopeptide (Lys-Gly) (interchain with G-Cter in SUMO2); alternate). The residue at position 56 (K56) is an N6-acetyllysine. Y155 carries the post-translational modification ADP-ribosyltyrosine. The interval 233-264 (GEGSSSGKATGDETGAKVERADGYEPPVQESV) is disordered. Phosphoserine is present on residues S236 and S237. A compositionally biased stretch (basic and acidic residues) spans 242 to 255 (TGDETGAKVERADG). The residue at position 249 (K249) is an N6-acetyllysine; alternate. A Glycyl lysine isopeptide (Lys-Gly) (interchain with G-Cter in SUMO2); alternate cross-link involves residue K249. At Y256 the chain carries Phosphotyrosine. S263 carries the post-translational modification Phosphoserine.

It belongs to the eukaryotic ribosomal protein eS1 family. In terms of assembly, component of the small ribosomal subunit. Mature ribosomes consist of a small (40S) and a large (60S) subunit. The 40S subunit contains about 33 different proteins and 1 molecule of RNA (18S). The 60S subunit contains about 49 different proteins and 3 molecules of RNA (28S, 5.8S and 5S). Part of the small subunit (SSU) processome, composed of more than 70 proteins and the RNA chaperone small nucleolar RNA (snoRNA) U3. Post-translationally, ADP-ribosylated at Tyr-155 by PARP1 in presence of HPF1.

It localises to the cytoplasm. It is found in the nucleus. The protein resides in the nucleolus. In terms of biological role, component of the small ribosomal subunit. The ribosome is a large ribonucleoprotein complex responsible for the synthesis of proteins in the cell. Part of the small subunit (SSU) processome, first precursor of the small eukaryotic ribosomal subunit. During the assembly of the SSU processome in the nucleolus, many ribosome biogenesis factors, an RNA chaperone and ribosomal proteins associate with the nascent pre-rRNA and work in concert to generate RNA folding, modifications, rearrangements and cleavage as well as targeted degradation of pre-ribosomal RNA by the RNA exosome. May play a role during erythropoiesis. The chain is Small ribosomal subunit protein eS1 from Callithrix jacchus (White-tufted-ear marmoset).